The sequence spans 329 residues: Nicotianamine synthase 8 (329 aa).

It belongs to the nicotianamine synthase (NAS)-like family. Homotrimer.

The catalysed reaction is 3 S-adenosyl-L-methionine = nicotianamine + 3 S-methyl-5'-thioadenosine + 3 H(+). Synthesizes nicotianamine, a polyamine that is the first intermediate in the synthesis of the phytosiderophores of the mugineic acid type found in gramineae which serve as a sensor for the physiological iron status within the plant, and/or might be involved in the transport of iron. This chain is Nicotianamine synthase 8 (NAS8), found in Hordeum vulgare (Barley).